We begin with the raw amino-acid sequence, 263 residues long: Chromosomal replication initiator protein DnaA (263 aa).

Residue Asp-1 is a region of interest, domain I, interacts with DnaA modulators. Position 1 (Asp-1) is a region of interest, domain II. Residues Asp-1 to Ile-177 form a domain III, AAA+ region region. 4 residues coordinate ATP: Gly-3, Gly-5, Lys-6, and Thr-7. The interval Ile-178–Phe-263 is domain IV, binds dsDNA.

This sequence belongs to the DnaA family. Oligomerizes as a right-handed, spiral filament on DNA at oriC.

It is found in the cytoplasm. In terms of biological role, plays an essential role in the initiation and regulation of chromosomal replication. ATP-DnaA binds to the origin of replication (oriC) to initiate formation of the DNA replication initiation complex once per cell cycle. Binds the DnaA box (a 9 base pair repeat at the origin) and separates the double-stranded (ds)DNA. Forms a right-handed helical filament on oriC DNA; dsDNA binds to the exterior of the filament while single-stranded (ss)DNA is stabiized in the filament's interior. The ATP-DnaA-oriC complex binds and stabilizes one strand of the AT-rich DNA unwinding element (DUE), permitting loading of DNA polymerase. After initiation quickly degrades to an ADP-DnaA complex that is not apt for DNA replication. Binds acidic phospholipids. The sequence is that of Chromosomal replication initiator protein DnaA from Spiroplasma apis.